The following is a 361-amino-acid chain: Peptide chain release factor 1 (361 aa).

Gln-235 is modified (N5-methylglutamine).

The protein belongs to the prokaryotic/mitochondrial release factor family. Post-translationally, methylated by PrmC. Methylation increases the termination efficiency of RF1.

The protein localises to the cytoplasm. Functionally, peptide chain release factor 1 directs the termination of translation in response to the peptide chain termination codons UAG and UAA. The polypeptide is Peptide chain release factor 1 (Xanthomonas oryzae pv. oryzae (strain MAFF 311018)).